Reading from the N-terminus, the 275-residue chain is 3-methyl-2-oxobutanoate hydroxymethyltransferase (275 aa).

The Mg(2+) site is built by Asp55 and Asp94. Residues Asp55–Ser56, Asp94, and Lys122 contribute to the 3-methyl-2-oxobutanoate site. Glu124 is a Mg(2+) binding site. Glu191 (proton acceptor) is an active-site residue.

This sequence belongs to the PanB family. Homodecamer; pentamer of dimers. Mg(2+) serves as cofactor.

It is found in the cytoplasm. The enzyme catalyses 3-methyl-2-oxobutanoate + (6R)-5,10-methylene-5,6,7,8-tetrahydrofolate + H2O = 2-dehydropantoate + (6S)-5,6,7,8-tetrahydrofolate. It functions in the pathway cofactor biosynthesis; (R)-pantothenate biosynthesis; (R)-pantoate from 3-methyl-2-oxobutanoate: step 1/2. Functionally, catalyzes the reversible reaction in which hydroxymethyl group from 5,10-methylenetetrahydrofolate is transferred onto alpha-ketoisovalerate to form ketopantoate. The chain is 3-methyl-2-oxobutanoate hydroxymethyltransferase from Marinomonas sp. (strain MWYL1).